The sequence spans 165 residues: Cytochrome c-type biogenesis protein CcmE (165 aa).

Over 1-7 (MTRKQKR) the chain is Cytoplasmic. Residues 8 to 28 (LAVIAGGMGFIIAAVLLVMFA) traverse the membrane as a helical; Signal-anchor for type II membrane protein segment. The Periplasmic segment spans residues 29–165 (FSQSVAYFYM…GQGQEAKATR (137 aa)). Residues histidine 124 and tyrosine 128 each coordinate heme. Low complexity predominate over residues 144-154 (QDGQGAQSQAG). The tract at residues 144–165 (QDGQGAQSQAGQGQGQEAKATR) is disordered.

It belongs to the CcmE/CycJ family.

Its subcellular location is the cell inner membrane. Functionally, heme chaperone required for the biogenesis of c-type cytochromes. Transiently binds heme delivered by CcmC and transfers the heme to apo-cytochromes in a process facilitated by CcmF and CcmH. In Rhizobium etli (strain CIAT 652), this protein is Cytochrome c-type biogenesis protein CcmE.